We begin with the raw amino-acid sequence, 211 residues long: LexA repressor (211 aa).

Positions arginine 35 to lysine 55 form a DNA-binding region, H-T-H motif. Active-site for autocatalytic cleavage activity residues include serine 128 and lysine 165.

Belongs to the peptidase S24 family. Homodimer.

It carries out the reaction Hydrolysis of Ala-|-Gly bond in repressor LexA.. In terms of biological role, represses a number of genes involved in the response to DNA damage (SOS response), including recA and lexA. In the presence of single-stranded DNA, RecA interacts with LexA causing an autocatalytic cleavage which disrupts the DNA-binding part of LexA, leading to derepression of the SOS regulon and eventually DNA repair. This chain is LexA repressor, found in Colwellia psychrerythraea (strain 34H / ATCC BAA-681) (Vibrio psychroerythus).